We begin with the raw amino-acid sequence, 491 residues long: Ketol-acid reductoisomerase (NADP(+)) (491 aa).

Residues 15-208 enclose the KARI N-terminal Rossmann domain; sequence AQLGKCRFMG…GGHRAGVLES (194 aa). NADP(+) contacts are provided by residues 45 to 48, Arg68, Arg76, Ser78, and 108 to 110; these read CGAQ and DKQ. His132 is an active-site residue. Position 158 (Gly158) interacts with NADP(+). KARI C-terminal knotted domains are found at residues 209 to 344 and 345 to 484; these read SFVA…TAPQ and YEGK…MTDM. Asp217, Glu221, Glu389, and Glu393 together coordinate Mg(2+). Ser414 contacts substrate.

The protein belongs to the ketol-acid reductoisomerase family. It depends on Mg(2+) as a cofactor.

It catalyses the reaction (2R)-2,3-dihydroxy-3-methylbutanoate + NADP(+) = (2S)-2-acetolactate + NADPH + H(+). The catalysed reaction is (2R,3R)-2,3-dihydroxy-3-methylpentanoate + NADP(+) = (S)-2-ethyl-2-hydroxy-3-oxobutanoate + NADPH + H(+). It functions in the pathway amino-acid biosynthesis; L-isoleucine biosynthesis; L-isoleucine from 2-oxobutanoate: step 2/4. Its pathway is amino-acid biosynthesis; L-valine biosynthesis; L-valine from pyruvate: step 2/4. Involved in the biosynthesis of branched-chain amino acids (BCAA). Catalyzes an alkyl-migration followed by a ketol-acid reduction of (S)-2-acetolactate (S2AL) to yield (R)-2,3-dihydroxy-isovalerate. In the isomerase reaction, S2AL is rearranged via a Mg-dependent methyl migration to produce 3-hydroxy-3-methyl-2-ketobutyrate (HMKB). In the reductase reaction, this 2-ketoacid undergoes a metal-dependent reduction by NADPH to yield (R)-2,3-dihydroxy-isovalerate. This chain is Ketol-acid reductoisomerase (NADP(+)), found in Escherichia coli O6:K15:H31 (strain 536 / UPEC).